Here is a 392-residue protein sequence, read N- to C-terminus: MDPTDLSFSPDEINKLIETGLNTVEYFTSQQVTGTSSLGKNTIPPGVTGLLTNAAEAKIQESTNHQKGSVGGGAKPKKPRPKIAIVPADDKTVPGKPIPNPLLGLDSTPSTQTVLDLSGKTLPSGSYKGVKLAKFGKENLMTRFIEEPRENPIATSSPIDFKRGAGIPAGSIEGSTQSDGWEMKSRSLSGAIHPVLQSPLQQGDLNALVTSVQSLALNVNEILNTVRNLDSRMNQLETKVDRILSSQSLIQTIKNDIVGLKAGMATLEGMITTVKIMDPGVPSNVTVEDVRKTLSNHAVVVPESFNDSFLTQSEDVISLDELARPTATSVKKIVRKVPPQKDLTGLKITLEQLAKDCISKPKMREEYLLKINQASSEAQLIDLKKAIIRSAI.

2 disordered regions span residues 61–107 (ESTN…GLDS) and 152–182 (PIATSSPIDFKRGAGIPAGSIEGSTQSDGWE). The multimerization stretch occupies residues 217-280 (LNVNEILNTV…ITTVKIMDPG (64 aa)). The stretch at 219 to 246 (VNEILNTVRNLDSRMNQLETKVDRILSS) forms a coiled coil.

It belongs to the rubulavirus/avulavirus P protein family. Homotetramer. Interacts (via multimerization domain) with polymerase L; this interaction forms the polymerase L-P complex. Interacts (via N-terminus) with N0 (via Ncore); this interaction allows P to chaperon N0 to avoid N polymerization before encapsidation. Interacts (via C-terminus) with N-RNA template; this interaction positions the polymerase on the template for both transcription and replication.

Functionally, essential cofactor of the RNA polymerase L that plays a central role in the transcription and replication by forming the polymerase complex with RNA polymerase L and recruiting L to the genomic N-RNA template for RNA synthesis. Also plays a central role in the encapsidation of nascent RNA chains by forming the encapsidation complex with the nucleocapsid protein N (N-P complex). Acts as a chaperone for newly synthesized free N protein, so-called N0, allowing encapsidation of nascent RNA chains during replication. The nucleoprotein protein N prevents excessive phosphorylation of P, which leads to down-regulation of viral transcription/ replication. Participates, together with N, in the formation of viral factories (viroplasms), which are large inclusions in the host cytoplasm where replication takes place. This is Phosphoprotein (P/V) from Canis lupus familiaris (Dog).